We begin with the raw amino-acid sequence, 136 residues long: UPF0216 protein PF0452 (136 aa).

Belongs to the UPF0216 family.

The chain is UPF0216 protein PF0452 from Pyrococcus furiosus (strain ATCC 43587 / DSM 3638 / JCM 8422 / Vc1).